A 159-amino-acid polypeptide reads, in one-letter code: Phosphopantetheine adenylyltransferase (159 aa).

T10 provides a ligand contact to substrate. Residues 10–11 and H18 each bind ATP; that span reads TF. Substrate-binding residues include K42, M74, and R88. Residues 89–91, E99, and 124–130 each bind ATP; these read GLR and WSFISSS.

Belongs to the bacterial CoaD family. Homohexamer. Mg(2+) serves as cofactor.

The protein localises to the cytoplasm. The enzyme catalyses (R)-4'-phosphopantetheine + ATP + H(+) = 3'-dephospho-CoA + diphosphate. It functions in the pathway cofactor biosynthesis; coenzyme A biosynthesis; CoA from (R)-pantothenate: step 4/5. Its function is as follows. Reversibly transfers an adenylyl group from ATP to 4'-phosphopantetheine, yielding dephospho-CoA (dPCoA) and pyrophosphate. The chain is Phosphopantetheine adenylyltransferase from Shigella sonnei (strain Ss046).